Here is a 130-residue protein sequence, read N- to C-terminus: S-adenosylmethionine decarboxylase proenzyme (130 aa).

Serine 66 serves as the catalytic Schiff-base intermediate with substrate; via pyruvic acid. Residue serine 66 is modified to Pyruvic acid (Ser); by autocatalysis. Histidine 71 acts as the Proton acceptor; for processing activity in catalysis. Catalysis depends on cysteine 86, which acts as the Proton donor; for catalytic activity.

This sequence belongs to the prokaryotic AdoMetDC family. Type 1 subfamily. In terms of assembly, heterotetramer of two alpha and two beta chains arranged as a dimer of alpha/beta heterodimers. Requires pyruvate as cofactor. Is synthesized initially as an inactive proenzyme. Formation of the active enzyme involves a self-maturation process in which the active site pyruvoyl group is generated from an internal serine residue via an autocatalytic post-translational modification. Two non-identical subunits are generated from the proenzyme in this reaction, and the pyruvate is formed at the N-terminus of the alpha chain, which is derived from the carboxyl end of the proenzyme. The post-translation cleavage follows an unusual pathway, termed non-hydrolytic serinolysis, in which the side chain hydroxyl group of the serine supplies its oxygen atom to form the C-terminus of the beta chain, while the remainder of the serine residue undergoes an oxidative deamination to produce ammonia and the pyruvoyl group blocking the N-terminus of the alpha chain.

It carries out the reaction S-adenosyl-L-methionine + H(+) = S-adenosyl 3-(methylsulfanyl)propylamine + CO2. The protein operates within amine and polyamine biosynthesis; S-adenosylmethioninamine biosynthesis; S-adenosylmethioninamine from S-adenosyl-L-methionine: step 1/1. Catalyzes the decarboxylation of S-adenosylmethionine to S-adenosylmethioninamine (dcAdoMet), the propylamine donor required for the synthesis of the polyamines spermine and spermidine from the diamine putrescine. This Bacillus cytotoxicus (strain DSM 22905 / CIP 110041 / 391-98 / NVH 391-98) protein is S-adenosylmethionine decarboxylase proenzyme.